The primary structure comprises 139 residues: Nucleoside diphosphate kinase (139 aa).

ATP-binding residues include Lys12, Phe60, Arg88, Thr94, Arg105, and Asn115. His118 (pros-phosphohistidine intermediate) is an active-site residue.

Belongs to the NDK family. In terms of assembly, homotetramer. Mg(2+) serves as cofactor.

The protein resides in the cytoplasm. It carries out the reaction a 2'-deoxyribonucleoside 5'-diphosphate + ATP = a 2'-deoxyribonucleoside 5'-triphosphate + ADP. The catalysed reaction is a ribonucleoside 5'-diphosphate + ATP = a ribonucleoside 5'-triphosphate + ADP. In terms of biological role, major role in the synthesis of nucleoside triphosphates other than ATP. The ATP gamma phosphate is transferred to the NDP beta phosphate via a ping-pong mechanism, using a phosphorylated active-site intermediate. The chain is Nucleoside diphosphate kinase from Caldanaerobacter subterraneus subsp. tengcongensis (strain DSM 15242 / JCM 11007 / NBRC 100824 / MB4) (Thermoanaerobacter tengcongensis).